Reading from the N-terminus, the 324-residue chain is Archaeosine synthase subunit beta (324 aa).

The Radical SAM core domain occupies 12-254 (GKPGTALFII…LIWAKRKFPN (243 aa)). Residues Cys-27, Cys-36, and Cys-39 each contribute to the [4Fe-4S] cluster site.

Belongs to the radical SAM superfamily. RaSEA family. In terms of assembly, forms a robust complex with the archaeosine synthase alpha subunit ArcS, likely an alpha(2)beta(2) heterotetrameric structure. [4Fe-4S] cluster serves as cofactor.

It carries out the reaction 7-N-[(5S)-5-amino-5-carboxypentyl]formamidino-7-deazaguanosine(15) in tRNA + S-adenosyl-L-methionine = archaeosine(15) in tRNA + L-1-piperideine-6-carboxylate + 5'-deoxyadenosine + L-methionine + 2 H(+). It participates in tRNA modification; archaeosine-tRNA biosynthesis. Its function is as follows. Radical SAM enzyme involved in the synthesis of archaeosine, a modified nucleoside present in the dihydrouridine loop (D-loop) of archaeal tRNAs. Catalyzes the cleavage of the C(epsilon)-N bond of the lysine moiety of q0kN15-tRNA, leading to the formation of archaeosine at position 15 in tRNAs. The sequence is that of Archaeosine synthase subunit beta from Thermococcus kodakarensis (strain ATCC BAA-918 / JCM 12380 / KOD1) (Pyrococcus kodakaraensis (strain KOD1)).